We begin with the raw amino-acid sequence, 214 residues long: Phosphoenolpyruvate guanylyltransferase 2 (214 aa).

Residues Thr135, Gly150, and Ser153 each coordinate phosphoenolpyruvate.

The protein belongs to the CofC family.

It carries out the reaction phosphoenolpyruvate + GTP + H(+) = enolpyruvoyl-2-diphospho-5'-guanosine + diphosphate. Its pathway is cofactor biosynthesis; coenzyme F420 biosynthesis. Functionally, guanylyltransferase that catalyzes the activation of phosphoenolpyruvate (PEP) as enolpyruvoyl-2-diphospho-5'-guanosine, via the condensation of PEP with GTP. It is involved in the biosynthesis of coenzyme F420, a hydride carrier cofactor. This chain is Phosphoenolpyruvate guanylyltransferase 2, found in Rhodococcus jostii (strain RHA1).